The primary structure comprises 209 residues: Small ribosomal subunit protein uS3 (209 aa).

The region spanning 38 to 107 (IRKIIKNKYY…RVVINIEEIK (70 aa)) is the KH type-2 domain.

The protein belongs to the universal ribosomal protein uS3 family. Part of the 30S ribosomal subunit. Forms a tight complex with proteins S10 and S14.

Binds the lower part of the 30S subunit head. Binds mRNA in the 70S ribosome, positioning it for translation. This Thermotoga maritima (strain ATCC 43589 / DSM 3109 / JCM 10099 / NBRC 100826 / MSB8) protein is Small ribosomal subunit protein uS3.